A 203-amino-acid chain; its full sequence is Ribosome-binding factor A (203 aa).

The span at 119 to 141 shows a compositional bias: basic and acidic residues; sequence LAEVRRDARPAGDEDPYRRPRTV. A disordered region spans residues 119–203; sequence LAEVRRDARP…SPGGDPTAGR (85 aa). The segment covering 142-169 has biased composition (acidic residues); sequence DEDDEDEDEDLVDEFDEFDRVEELDADA.

Belongs to the RbfA family. As to quaternary structure, monomer. Binds 30S ribosomal subunits, but not 50S ribosomal subunits or 70S ribosomes.

Its subcellular location is the cytoplasm. Functionally, one of several proteins that assist in the late maturation steps of the functional core of the 30S ribosomal subunit. Associates with free 30S ribosomal subunits (but not with 30S subunits that are part of 70S ribosomes or polysomes). Required for efficient processing of 16S rRNA. May interact with the 5'-terminal helix region of 16S rRNA. The chain is Ribosome-binding factor A from Frankia alni (strain DSM 45986 / CECT 9034 / ACN14a).